Reading from the N-terminus, the 295-residue chain is Glutamyl-Q tRNA(Asp) synthetase (295 aa).

Residues 5–9 (RFAPS) and glutamate 41 each bind L-glutamate. Residues 8–18 (PSPTGLLHIGS) carry the 'HIGH' region motif. Zn(2+)-binding residues include cysteine 97, cysteine 99, tyrosine 117, and cysteine 121. Tyrosine 178 and arginine 196 together coordinate L-glutamate. Residues 234-238 (KWSKQ) carry the 'KMSKS' region motif. ATP is bound at residue lysine 237.

It belongs to the class-I aminoacyl-tRNA synthetase family. GluQ subfamily. Zn(2+) serves as cofactor.

Catalyzes the tRNA-independent activation of glutamate in presence of ATP and the subsequent transfer of glutamate onto a tRNA(Asp). Glutamate is transferred on the 2-amino-5-(4,5-dihydroxy-2-cyclopenten-1-yl) moiety of the queuosine in the wobble position of the QUC anticodon. The chain is Glutamyl-Q tRNA(Asp) synthetase from Neisseria meningitidis serogroup C (strain 053442).